The sequence spans 393 residues: Na(+)/H(+) antiporter NhaA 2 (393 aa).

Transmembrane regions (helical) follow at residues 18–38 (SGGLLLIASAAAALLVANSQL), 53–73 (LSVQHWVNDALMAVFFLMVGL), 91–111 (ILPGAAAAAGMAVPALVYLAF), 120–140 (GWAIPAATDIAFALGVISLLG), 149–169 (VFLAALAIIDDLGAVIVIGLF), 172–192 (TGVSLMDLGLAAAGVAALVAL), 208–228 (LVLWFFTYRSGVHATIAGVLL), 263–283 (FIIVPIFGFANAGVSFSGLGM), 294–314 (VAAGLAIGKLVGIFGAVLLLV), 332–352 (GTTLLCGIGFTMSLFISLLAF), and 363–383 (IGILIGSLVAGLAGFIVLRFS).

The protein belongs to the NhaA Na(+)/H(+) (TC 2.A.33) antiporter family.

It localises to the cell inner membrane. It carries out the reaction Na(+)(in) + 2 H(+)(out) = Na(+)(out) + 2 H(+)(in). Functionally, na(+)/H(+) antiporter that extrudes sodium in exchange for external protons. The chain is Na(+)/H(+) antiporter NhaA 2 from Brucella anthropi (strain ATCC 49188 / DSM 6882 / CCUG 24695 / JCM 21032 / LMG 3331 / NBRC 15819 / NCTC 12168 / Alc 37) (Ochrobactrum anthropi).